A 576-amino-acid polypeptide reads, in one-letter code: Protein NRT1/ PTR FAMILY 2.12 (576 aa).

The next 11 membrane-spanning stretches (helical) occupy residues phenylalanine 58–isoleucine 78, isoleucine 89–leucine 109, lysine 130–isoleucine 150, phenylalanine 176–valine 196, tryptophan 203–valine 223, valine 329–phenylalanine 349, isoleucine 364–tyrosine 384, methionine 406–valine 426, tryptophan 441–isoleucine 461, isoleucine 475–valine 495, and tyrosine 522–alanine 542.

This sequence belongs to the major facilitator superfamily. Proton-dependent oligopeptide transporter (POT/PTR) (TC 2.A.17) family. As to expression, expressed in flowers and siliques. Expressed in vascular bundle of the siliques and in funiculus.

It is found in the cell membrane. In terms of biological role, low-affinity proton-dependent nitrate transporter. Not involved in dipeptides transport. Involved in delivering nitrate for seed development. The sequence is that of Protein NRT1/ PTR FAMILY 2.12 (NPF2.12) from Arabidopsis thaliana (Mouse-ear cress).